The following is a 337-amino-acid chain: Holliday junction branch migration complex subunit RuvB (337 aa).

The tract at residues 1-20 (MQTRFVSPVNHDEEQDEPSV) is disordered. The tract at residues 1–181 (MQTRFVSPVN…FGIILRLDLY (181 aa)) is large ATPase domain (RuvB-L). ATP-binding positions include R21, G62, K65, T66, T67, 128-130 (EDY), R171, Y181, and R218. T66 contacts Mg(2+). Residues 182-252 (DPSELTVIVT…IANTALFALG (71 aa)) form a small ATPAse domain (RuvB-S) region. Residues 255 to 337 (QKGLDILDRR…SHTRDLTSFL (83 aa)) are head domain (RuvB-H). DNA contacts are provided by R310 and R315.

The protein belongs to the RuvB family. In terms of assembly, homohexamer. Forms an RuvA(8)-RuvB(12)-Holliday junction (HJ) complex. HJ DNA is sandwiched between 2 RuvA tetramers; dsDNA enters through RuvA and exits via RuvB. An RuvB hexamer assembles on each DNA strand where it exits the tetramer. Each RuvB hexamer is contacted by two RuvA subunits (via domain III) on 2 adjacent RuvB subunits; this complex drives branch migration. In the full resolvosome a probable DNA-RuvA(4)-RuvB(12)-RuvC(2) complex forms which resolves the HJ.

Its subcellular location is the cytoplasm. It carries out the reaction ATP + H2O = ADP + phosphate + H(+). Its function is as follows. The RuvA-RuvB-RuvC complex processes Holliday junction (HJ) DNA during genetic recombination and DNA repair, while the RuvA-RuvB complex plays an important role in the rescue of blocked DNA replication forks via replication fork reversal (RFR). RuvA specifically binds to HJ cruciform DNA, conferring on it an open structure. The RuvB hexamer acts as an ATP-dependent pump, pulling dsDNA into and through the RuvAB complex. RuvB forms 2 homohexamers on either side of HJ DNA bound by 1 or 2 RuvA tetramers; 4 subunits per hexamer contact DNA at a time. Coordinated motions by a converter formed by DNA-disengaged RuvB subunits stimulates ATP hydrolysis and nucleotide exchange. Immobilization of the converter enables RuvB to convert the ATP-contained energy into a lever motion, pulling 2 nucleotides of DNA out of the RuvA tetramer per ATP hydrolyzed, thus driving DNA branch migration. The RuvB motors rotate together with the DNA substrate, which together with the progressing nucleotide cycle form the mechanistic basis for DNA recombination by continuous HJ branch migration. Branch migration allows RuvC to scan DNA until it finds its consensus sequence, where it cleaves and resolves cruciform DNA. The polypeptide is Holliday junction branch migration complex subunit RuvB (Methanospirillum hungatei JF-1 (strain ATCC 27890 / DSM 864 / NBRC 100397 / JF-1)).